We begin with the raw amino-acid sequence, 83 residues long: Arminin 3a (83 aa).

The signal sequence occupies residues 1-18; that stretch reads MKTVFAILFLTFIALTCA. Positions 19-57 are excised as a propeptide; sequence RNYEDLKEKIKNEVEREIFEDLEEESDELENNFKKFNDA. Ala80 is subject to Alanine amide.

This sequence belongs to the arminin family. As to expression, expressed in entodermal epithelium along the body column.

The protein resides in the secreted. Its subcellular location is the target cell membrane. Its function is as follows. Antimicrobial peptide with a broad-spectrum antimicrobial activity. Keeps its antibacterial activity under a wide range of salt concentrations that mimic physiological conditions of human blood, which is surprising, since Hydra is an obligate freshwater animal with nearly no salt tolerance. Does not affect red blood cells. This is Arminin 3a from Hydra vulgaris (Hydra).